Consider the following 313-residue polypeptide: Bifunctional pinoresinol-lariciresinol reductase 1 (313 aa).

NADP(+) is bound by residues 11-17 (GGTGYIG), arginine 36, and lysine 45. Lysine 138 functions as the Proton acceptor in the catalytic mechanism. NADP(+) is bound at residue arginine 142. Histidine 271 is a substrate binding site.

The protein belongs to the NmrA-type oxidoreductase family. Isoflavone reductase subfamily. In terms of assembly, dimer.

It catalyses the reaction (+)-lariciresinol + NADP(+) = (+)-pinoresinol + NADPH + H(+). It carries out the reaction (-)-lariciresinol + NADP(+) = (-)-pinoresinol + NADPH + H(+). The enzyme catalyses (+)-secoisolariciresinol + NADP(+) = (-)-lariciresinol + NADPH + H(+). In terms of biological role, reductase involved in lignan biosynthesis. Catalyzes the enantioselective sequential conversion of (-)-pinoresinol into (-)-lariciresinol and of (-)-lariciresinol into (+)-secoisolariciresinol. Can also convert with a lower efficiency (+)-pinoresinol into (+)-lariciresinol, but not (+)-lariciresinol into (-)-secoisolariciresinol. Abstracts the 4R-hydride from the NADPH cofactor during catalysis. This is Bifunctional pinoresinol-lariciresinol reductase 1 (PLR_Tp1) from Thuja plicata (Western red-cedar).